The chain runs to 955 residues: Thyroid hormone receptor-associated protein 3 (955 aa).

The segment at 1 to 94 (MSKTNKSKSG…YFRGRNRGFY (94 aa)) is disordered. S2 carries the N-acetylserine modification. A required for mRNA splicing activation region spans residues 2–190 (SKTNKSKSGS…KSSSKDSRPS (189 aa)). Positions 14–51 (SRSRSASRSRSRSFSKSRSRSRSLSRSRKRRLSSRSRS) are enriched in basic residues. The residue at position 17 (R17) is a Dimethylated arginine. The span at 58–75 (HNRERNHPRVYQNRDFRG) shows a compositional bias: basic and acidic residues. R66 carries the post-translational modification Asymmetric dimethylarginine. The span at 82 to 94 (RPYYFRGRNRGFY) shows a compositional bias: low complexity. R101 and R108 each carry asymmetric dimethylarginine. The segment at 117-559 (AYSPRRGRSR…AKGDFPTGKS (443 aa)) is disordered. Over residues 121-143 (RRGRSRSRSPKRRSPSPRSRSHS) the composition is skewed to basic residues. Residues 144 to 155 (RNSDKSSSDRSR) show a composition bias toward basic and acidic residues. Positions 157–166 (SSSSRSSSNH) are enriched in low complexity. Basic and acidic residues predominate over residues 167–188 (SRVESSKRKSAKEKKSSSKDSR). A Glycyl lysine isopeptide (Lys-Gly) (interchain with G-Cter in SUMO1); alternate cross-link involves residue K202. A Glycyl lysine isopeptide (Lys-Gly) (interchain with G-Cter in SUMO2); alternate cross-link involves residue K202. Polar residues predominate over residues 204 to 220 (QTFSGGTSQDTKASESS). K215 is covalently cross-linked (Glycyl lysine isopeptide (Lys-Gly) (interchain with G-Cter in SUMO2)). Position 220 is a phosphoserine (S220). K221 is covalently cross-linked (Glycyl lysine isopeptide (Lys-Gly) (interchain with G-Cter in SUMO2); alternate). K221 is subject to N6-acetyllysine; alternate. S232, S237, S240, S243, and S248 each carry phosphoserine. K252 is covalently cross-linked (Glycyl lysine isopeptide (Lys-Gly) (interchain with G-Cter in SUMO2); alternate). An N6-methyllysine; alternate modification is found at K252. 2 positions are modified to phosphoserine: S253 and S257. Over residues 266-276 (RPSPVPKPSPP) the composition is skewed to pro residues. The span at 282-300 (QMGSTLPSGAGYQSGTHQG) shows a compositional bias: polar residues. Residues 305–331 (GSGSLSPSKKSPVGKSPPSTGSTYGSS) are compositionally biased toward low complexity. Phosphoserine is present on residues S315, S320, and S323. At T324 the chain carries Phosphothreonine. S326 carries the post-translational modification Phosphoserine. Position 328 is a phosphotyrosine (Y328). K333 is covalently cross-linked (Glycyl lysine isopeptide (Lys-Gly) (interchain with G-Cter in SUMO2)). A Phosphoserine modification is found at S339. Residue K346 forms a Glycyl lysine isopeptide (Lys-Gly) (interchain with G-Cter in SUMO2); alternate linkage. N6-acetyllysine; alternate is present on K346. Basic and acidic residues predominate over residues 347-377 (RYLEEQKTENGKDKEQKQTNTDKEKIKEKGS). Glycyl lysine isopeptide (Lys-Gly) (interchain with G-Cter in SUMO2) cross-links involve residues K353 and K375. The interval 359–955 (DKEQKQTNTD…EKDNIQPTTE (597 aa)) is required for mRNA decay activity. Phosphoserine is present on residues S377 and S379. K387 is covalently cross-linked (Glycyl lysine isopeptide (Lys-Gly) (interchain with G-Cter in SUMO1); alternate). K387 participates in a covalent cross-link: Glycyl lysine isopeptide (Lys-Gly) (interchain with G-Cter in SUMO2); alternate. Residues K389 and K396 each participate in a glycyl lysine isopeptide (Lys-Gly) (interchain with G-Cter in SUMO2) cross-link. Position 397 is a phosphothreonine (T397). A Glycyl lysine isopeptide (Lys-Gly) (interchain with G-Cter in SUMO2) cross-link involves residue K401. S406 and S408 each carry phosphoserine. Positions 414-452 (LRDDFEKKMADFHKEEMDDQDKDKAKGRKESEFDDEPKF) are enriched in basic and acidic residues. Glycyl lysine isopeptide (Lys-Gly) (interchain with G-Cter in SUMO2) cross-links involve residues K421 and K427. S444 bears the Phosphoserine mark. Residue K451 forms a Glycyl lysine isopeptide (Lys-Gly) (interchain with G-Cter in SUMO1); alternate linkage. Residues K451 and K455 each participate in a glycyl lysine isopeptide (Lys-Gly) (interchain with G-Cter in SUMO2); alternate cross-link. Residue K455 is modified to N6-acetyllysine; alternate. Residues K461 and K467 each participate in a glycyl lysine isopeptide (Lys-Gly) (interchain with G-Cter in SUMO2) cross-link. Residue S468 is modified to Phosphoserine. Glycyl lysine isopeptide (Lys-Gly) (interchain with G-Cter in SUMO2); alternate cross-links involve residues K470 and K481. N6-acetyllysine; alternate is present on residues K470 and K481. K486 is covalently cross-linked (Glycyl lysine isopeptide (Lys-Gly) (interchain with G-Cter in SUMO2)). A compositionally biased stretch (basic and acidic residues) spans 495–521 (FPERSKKEDRGKRSEGGHRGFVPEKNF). Residue K519 is modified to N6-acetyllysine. A Glycyl lysine isopeptide (Lys-Gly) (interchain with G-Cter in SUMO2); alternate cross-link involves residue K527. Position 527 is an N6-acetyllysine; alternate (K527). The residue at position 535 (S535) is a Phosphoserine. A compositionally biased stretch (basic and acidic residues) spans 540 to 550 (KTSESRDKLGA). Residue K551 forms a Glycyl lysine isopeptide (Lys-Gly) (interchain with G-Cter in SUMO2) linkage. 552-559 (GDFPTGKS) lines the ATP pocket. Residue K558 forms a Glycyl lysine isopeptide (Lys-Gly) (interchain with G-Cter in SUMO2); alternate linkage. K558 bears the N6-acetyllysine; alternate mark. Phosphoserine occurs at positions 560, 562, and 575. Residue K602 forms a Glycyl lysine isopeptide (Lys-Gly) (interchain with G-Cter in SUMO2) linkage. S619, S622, S672, S682, and S684 each carry phosphoserine. Residues 663 to 680 (EQEAAKNKKSPEIHRRID) are compositionally biased toward basic and acidic residues. The interval 663-955 (EQEAAKNKKS…EKDNIQPTTE (293 aa)) is disordered. The span at 691-761 (LAHDEMKSPR…RSAEKTEKTH (71 aa)) shows a compositional bias: basic and acidic residues. K697 is covalently cross-linked (Glycyl lysine isopeptide (Lys-Gly) (interchain with G-Cter in SUMO2)). Residue S698 is modified to Phosphoserine. Glycyl lysine isopeptide (Lys-Gly) (interchain with G-Cter in SUMO2) cross-links involve residues K705, K709, K711, K756, and K759. A compositionally biased stretch (basic residues) spans 762–775 (KGSKKQKKHRRARD). The span at 779–789 (SSSSSSQSSHS) shows a compositional bias: low complexity. Residue K811 is modified to N6-acetyllysine. R845 is subject to Asymmetric dimethylarginine. The segment covering 848–859 (YSGNNNNNSNND) has biased composition (low complexity). Position 874 is a phosphothreonine (T874). Residues K876 and K879 each participate in a glycyl lysine isopeptide (Lys-Gly) (interchain with G-Cter in SUMO2) cross-link. Positions 881–895 (YLHDDREGEGSDKWV) are enriched in basic and acidic residues. A phosphoserine mark is found at S928 and S939. Over residues 930–940 (EEGEIEDDESG) the composition is skewed to acidic residues.

The protein belongs to the BCLAF1/THRAP3 family. In terms of assembly, associated with the large multiprotein complex TRAP (Mediator complex-like). Interacts with SFPQ; the interaction is dependent on SFPQ phosphorylation at 'Thr-687' and inhibits binding of SFPQ to an ESS1 exonic splicing silencer element-containing RNA. Interacts with NXF1. Component of the SNARP complex which consists at least of SNIP1, SNW1, THRAP3, BCLAF1 and PNN. Associated with spliced mRNP complexes. Interacts with HELZ2 and PPARG. Interacts with CLOCK and BMAL1. Component of a MACOM-like complex, named WTAP complex, composed of WTAP, ZC3H13, CBLL1, KIAA1429, RBM15, BCLAF1 and THRAP3. ADP-ribosylation during genotoxic stress promotes accumulation in nuclear speckles. In terms of tissue distribution, ubiquitous.

It is found in the nucleus. The protein localises to the nucleoplasm. It localises to the nucleus speckle. Involved in pre-mRNA splicing. Remains associated with spliced mRNA after splicing which probably involves interactions with the exon junction complex (EJC). Can trigger mRNA decay which seems to be independent of nonsense-mediated decay involving premature stop codons (PTC) recognition. May be involved in nuclear mRNA decay. Involved in regulation of signal-induced alternative splicing. During splicing of PTPRC/CD45 is proposed to sequester phosphorylated SFPQ from PTPRC/CD45 pre-mRNA in resting T-cells. Involved in cyclin-D1/CCND1 mRNA stability probably by acting as component of the SNARP complex which associates with both the 3'end of the CCND1 gene and its mRNA. Involved in response to DNA damage. Is excluced from DNA damage sites in a manner that parallels transcription inhibition; the function may involve the SNARP complex. Initially thought to play a role in transcriptional coactivation through its association with the TRAP complex; however, it is not regarded as a stable Mediator complex subunit. Cooperatively with HELZ2, enhances the transcriptional activation mediated by PPARG, maybe through the stabilization of the PPARG binding to DNA in presence of ligand. May play a role in the terminal stage of adipocyte differentiation. Plays a role in the positive regulation of the circadian clock. Acts as a coactivator of the CLOCK-BMAL1 heterodimer and promotes its transcriptional activator activity and binding to circadian target genes. The protein is Thyroid hormone receptor-associated protein 3 of Homo sapiens (Human).